The primary structure comprises 615 residues: DNA mismatch repair protein MutL (615 aa).

Positions 363–397 (FAEPAAREPVAPRYTPAPASGSRPAAPWPNAQPGY) are disordered. Over residues 364-391 (AEPAAREPVAPRYTPAPASGSRPAAPWP) the composition is skewed to low complexity.

This sequence belongs to the DNA mismatch repair MutL/HexB family.

In terms of biological role, this protein is involved in the repair of mismatches in DNA. It is required for dam-dependent methyl-directed DNA mismatch repair. May act as a 'molecular matchmaker', a protein that promotes the formation of a stable complex between two or more DNA-binding proteins in an ATP-dependent manner without itself being part of a final effector complex. The sequence is that of DNA mismatch repair protein MutL from Escherichia coli O9:H4 (strain HS).